A 491-amino-acid chain; its full sequence is UDP-N-acetylmuramate--L-alanine ligase (491 aa).

Glycine 126–threonine 132 lines the ATP pocket.

It belongs to the MurCDEF family.

It is found in the cytoplasm. It carries out the reaction UDP-N-acetyl-alpha-D-muramate + L-alanine + ATP = UDP-N-acetyl-alpha-D-muramoyl-L-alanine + ADP + phosphate + H(+). Its pathway is cell wall biogenesis; peptidoglycan biosynthesis. Its function is as follows. Cell wall formation. This is UDP-N-acetylmuramate--L-alanine ligase from Escherichia coli (strain K12 / MC4100 / BW2952).